Here is a 427-residue protein sequence, read N- to C-terminus: 4-hydroxy-3-methylbut-2-en-1-yl diphosphate synthase (flavodoxin) (427 aa).

Residues 1–21 (MNKLENTIDSDIAGPAPRHRT) form a disordered region. [4Fe-4S] cluster contacts are provided by cysteine 310, cysteine 313, cysteine 356, and glutamate 363.

It belongs to the IspG family. [4Fe-4S] cluster serves as cofactor.

It catalyses the reaction (2E)-4-hydroxy-3-methylbut-2-enyl diphosphate + oxidized [flavodoxin] + H2O + 2 H(+) = 2-C-methyl-D-erythritol 2,4-cyclic diphosphate + reduced [flavodoxin]. The protein operates within isoprenoid biosynthesis; isopentenyl diphosphate biosynthesis via DXP pathway; isopentenyl diphosphate from 1-deoxy-D-xylulose 5-phosphate: step 5/6. In terms of biological role, converts 2C-methyl-D-erythritol 2,4-cyclodiphosphate (ME-2,4cPP) into 1-hydroxy-2-methyl-2-(E)-butenyl 4-diphosphate. This Bradyrhizobium diazoefficiens (strain JCM 10833 / BCRC 13528 / IAM 13628 / NBRC 14792 / USDA 110) protein is 4-hydroxy-3-methylbut-2-en-1-yl diphosphate synthase (flavodoxin).